A 218-amino-acid polypeptide reads, in one-letter code: Pyridoxine/pyridoxamine 5'-phosphate oxidase (218 aa).

Substrate-binding positions include 12–15 (RMSY) and R70. FMN is bound by residues 65-70 (RTVLLR), 80-81 (YT), K87, and Q109. The substrate site is built by Y127, R131, and S135. Residues 145-146 (QS) and W191 each bind FMN. Residue 197-199 (RLH) participates in substrate binding. An FMN-binding site is contributed by R201.

The protein belongs to the pyridoxamine 5'-phosphate oxidase family. As to quaternary structure, homodimer. The cofactor is FMN.

The catalysed reaction is pyridoxamine 5'-phosphate + O2 + H2O = pyridoxal 5'-phosphate + H2O2 + NH4(+). It catalyses the reaction pyridoxine 5'-phosphate + O2 = pyridoxal 5'-phosphate + H2O2. It functions in the pathway cofactor metabolism; pyridoxal 5'-phosphate salvage; pyridoxal 5'-phosphate from pyridoxamine 5'-phosphate: step 1/1. The protein operates within cofactor metabolism; pyridoxal 5'-phosphate salvage; pyridoxal 5'-phosphate from pyridoxine 5'-phosphate: step 1/1. In terms of biological role, catalyzes the oxidation of either pyridoxine 5'-phosphate (PNP) or pyridoxamine 5'-phosphate (PMP) into pyridoxal 5'-phosphate (PLP). This is Pyridoxine/pyridoxamine 5'-phosphate oxidase from Acinetobacter baylyi (strain ATCC 33305 / BD413 / ADP1).